The following is a 457-amino-acid chain: Argininosuccinate lyase (457 aa).

It belongs to the lyase 1 family. Argininosuccinate lyase subfamily.

The protein localises to the cytoplasm. It carries out the reaction 2-(N(omega)-L-arginino)succinate = fumarate + L-arginine. It participates in amino-acid biosynthesis; L-arginine biosynthesis; L-arginine from L-ornithine and carbamoyl phosphate: step 3/3. This Bacillus pumilus (strain SAFR-032) protein is Argininosuccinate lyase.